The sequence spans 375 residues: Fluoride export protein 2 (375 aa).

Residues 1–11 (MIFNPVISNHK) are Cytoplasmic-facing. A helical transmembrane segment spans residues 12–32 (LSHYIHVFCTFTTFCILGTET). The Extracellular segment spans residues 33–34 (RQ). The helical transmembrane segment at 35-55 (AITALSTYTPAFVTAPTVLWS) threads the bilayer. Over 56–79 (NCSSCMLMGIMQSLNAYTWMKDHQ) the chain is Cytoplasmic. A helical membrane pass occupies residues 80–100 (VLFLGVTTGYCGALSSFSSML). Residues 101-127 (LEMFEHSTNLTNGNIANHTKLPNRAYG) lie on the Extracellular side of the membrane. Asn-109 and Asn-117 each carry an N-linked (GlcNAc...) asparagine glycan. Residues 128–148 (IMEFLSVLLVHLMVSMGSLIF) form a helical membrane-spanning segment. At 149–213 (GRQLGKEVIV…FKKFFDVVDK (65 aa)) the chain is on the cytoplasmic side. Residues 214–234 (LAYALAFPLIILFVVLCAYYE) traverse the membrane as a helical segment. An N-linked (GlcNAc...) asparagine glycan is attached at Asn-235. Residues 235 to 241 (NYSRGKW) lie on the Extracellular side of the membrane. A helical transmembrane segment spans residues 242–262 (TLPCLFGIFAGFLRYWLAEMF). Residues 263–268 (NKTNKK) lie on the Cytoplasmic side of the membrane. A helical transmembrane segment spans residues 269-289 (FPLGTFLANVFATLLIGIFTM). At 290-310 (VQRGKKHFSTDIPIVNSLNSC) the chain is on the extracellular side. A helical membrane pass occupies residues 311–331 (HIVSALISGFCGTLSTISTFI). The Cytoplasmic portion of the chain corresponds to 332-338 (NEGYKLS). A helical transmembrane segment spans residues 339 to 359 (FINMLIYYTVSIGISYCLLVI). Over 360–375 (TLGSYAWTRGLTNPIC) the chain is Extracellular.

Belongs to the fluoride channel Fluc/FEX (TC 1.A.43) family.

The protein resides in the cell membrane. It catalyses the reaction fluoride(in) = fluoride(out). Fluoride channel required for the rapid expulsion of cytoplasmic fluoride. This is Fluoride export protein 2 from Saccharomyces cerevisiae (strain ATCC 204508 / S288c) (Baker's yeast).